Here is a 340-residue protein sequence, read N- to C-terminus: Phenylalanine--tRNA ligase alpha subunit (340 aa).

Mg(2+) is bound at residue E254.

It belongs to the class-II aminoacyl-tRNA synthetase family. Phe-tRNA synthetase alpha subunit type 1 subfamily. In terms of assembly, tetramer of two alpha and two beta subunits. Requires Mg(2+) as cofactor.

The protein localises to the cytoplasm. It carries out the reaction tRNA(Phe) + L-phenylalanine + ATP = L-phenylalanyl-tRNA(Phe) + AMP + diphosphate + H(+). The protein is Phenylalanine--tRNA ligase alpha subunit of Caldicellulosiruptor saccharolyticus (strain ATCC 43494 / DSM 8903 / Tp8T 6331).